Reading from the N-terminus, the 501-residue chain is Probable sucrose utilization protein SUC1 (501 aa).

The segment at residues 13-39 (CDSCSFRKVKCDMKTPCSRCVLNNLKC) is a DNA-binding region (zn(2)-C6 fungal-type).

It belongs to the MAL13 family.

Its subcellular location is the nucleus. In terms of biological role, affects sucrose utilization and alpha-glucosidase activity. Probable transcriptional activator. This is Probable sucrose utilization protein SUC1 (SUC1) from Candida albicans (strain SC5314 / ATCC MYA-2876) (Yeast).